The following is an 895-amino-acid chain: Pyruvate dehydrogenase E1 component (895 aa).

The segment at 1–20 is disordered; sequence MSAVPEQILGASSANDADPQ.

As to quaternary structure, homodimer. Part of the PDH complex, consisting of multiple copies of pyruvate dehydrogenase (E1), dihydrolipoamide acetyltransferase (E2) and lipoamide dehydrogenase (E3). It depends on thiamine diphosphate as a cofactor.

It catalyses the reaction N(6)-[(R)-lipoyl]-L-lysyl-[protein] + pyruvate + H(+) = N(6)-[(R)-S(8)-acetyldihydrolipoyl]-L-lysyl-[protein] + CO2. Component of the pyruvate dehydrogenase (PDH) complex, that catalyzes the overall conversion of pyruvate to acetyl-CoA and CO(2). This Cupriavidus necator (strain ATCC 17699 / DSM 428 / KCTC 22496 / NCIMB 10442 / H16 / Stanier 337) (Ralstonia eutropha) protein is Pyruvate dehydrogenase E1 component (pdhA).